A 220-amino-acid chain; its full sequence is GTP-binding protein YPT53 (220 aa).

GTP contacts are provided by residues 19 to 26 (GESAVGKS), 67 to 71 (DTAGQ), and 125 to 128 (NKMD). 2 S-geranylgeranyl cysteine lipidation sites follow: Cys-218 and Cys-220. Cys-220 is subject to Cysteine methyl ester.

Belongs to the small GTPase superfamily. Rab family.

The protein localises to the cell membrane. Required for transport in the endocytic pathway and for correct sorting of the vacuolar hydrolases suggesting a possible intersection of the endocytic with the vacuolar sorting pathway. May be involved in recruiting the MON1-CCZ1 complex to membranes enriched in phosphatidylinositol 3-phosphate (PtdIns[3]P) or other charged lipids, leading to recruitment of YPT7. The protein is GTP-binding protein YPT53 (YPT53) of Saccharomyces cerevisiae (strain ATCC 204508 / S288c) (Baker's yeast).